The chain runs to 592 residues: Solute carrier family 13 member 2 (592 aa).

4 helical membrane passes run 13-33 (SYLI…LVPS), 53-73 (ALPL…MGIV), 86-106 (SNLL…WNLH), and 114-134 (LLIV…VTAF). Residues 165–177 (SSNVEEGSNNPTF) show a composition bias toward polar residues. Residues 165 to 185 (SSNVEEGSNNPTFELQEPSPQ) are disordered. 8 consecutive transmembrane segments (helical) span residues 221–241 (MSLC…TGTA), 274–294 (MVIL…GFNF), 324–344 (PMTF…LLWF), 371–391 (GTVA…FPGL), 450–470 (PLQS…VATF), 482–502 (IFLP…LYVM), 511–531 (LAFM…FGDL), and 545–565 (IIGV…LFSL).

Belongs to the SLC13A/DASS transporter (TC 2.A.47) family. NADC subfamily. As to expression, expressed in kidney and intestine. In kidney expressed in the proximal tubule (at protein level).

It is found in the apical cell membrane. It carries out the reaction succinate(out) + 3 Na(+)(out) = succinate(in) + 3 Na(+)(in). It catalyses the reaction fumarate(out) + 3 Na(+)(out) = fumarate(in) + 3 Na(+)(in). The catalysed reaction is 2-oxoglutarate(out) + 3 Na(+)(out) = 2-oxoglutarate(in) + 3 Na(+)(in). With respect to regulation, li(+) decreases succinate transport in the presence of Na(+), by competing at one of the three cation binding sites. In terms of biological role, low-affinity sodium-dicarboxylate cotransporter, that mediates the entry of citric acid cycle intermediates, such as succinate, citrate, fumarate and alpha-ketoglutarate (2-oxoglutarate) into the small intestine and renal proximal tubule. Transports the dicarboxylate into the cell with a probable stoichiometry of 3 Na(+) for 1 divalent dicarboxylate, rendering the process electrogenic. Citrate is transported in protonated form as a divalent anion, rather than the trivalent form which is normally found in blood. Has a critical role in renal dicarboxylate transport. This chain is Solute carrier family 13 member 2 (SLC13A2), found in Homo sapiens (Human).